Reading from the N-terminus, the 288-residue chain is Peroxisomal membrane protein pex13 (288 aa).

The tract at residues 1-32 (METNQNEKGPSLPSYPAGGIMSVSNSNADTNQ) is disordered. Over residues 22-32 (SVSNSNADTNQ) the composition is skewed to polar residues. Residues 178–198 (IYSIVSSLAIILGLVGLPYAI) form a helical membrane-spanning segment. The SH3 domain occupies 222–288 (DSLEFCKADY…PSNYCSIISR (67 aa)).

The protein belongs to the peroxin-13 family. In terms of assembly, interacts (via SH3 domain) with PEX14 (via SH3-binding motif); forming the PEX13-PEX14 docking complex.

Its subcellular location is the peroxisome membrane. Component of the PEX13-PEX14 docking complex, a translocon channel that specifically mediates the import of peroxisomal cargo proteins bound to PEX5 receptor. The PEX13-PEX14 docking complex forms a large import pore which can be opened to a diameter of about 9 nm. Mechanistically, PEX5 receptor along with cargo proteins associates with the PEX14 subunit of the PEX13-PEX14 docking complex in the cytosol, leading to the insertion of the receptor into the organelle membrane with the concomitant translocation of the cargo into the peroxisome matrix. In Schizosaccharomyces pombe (strain 972 / ATCC 24843) (Fission yeast), this protein is Peroxisomal membrane protein pex13 (pex13).